The following is a 220-amino-acid chain: MKTGALTTFLALCLPVTVFATTLRLSNEVDLLVLDGKKVSSSLLRGAESIELENGPHQLVFRVEKTIRLSGNEERLYISPPLVISFDTQLISQVNFQLPRLENEREASHFNAAPRLALLDGDAMPIPVKLDILAITSTAKVVDYEIETERYNKSAKRASLPQFATMMADDSTLLSDVSELDTVPPQSQTLTEQRLKYWFRLADPQTRHHFLQWAEKQPPS.

An N-terminal signal peptide occupies residues 1–20 (MKTGALTTFLALCLPVTVFA).

Belongs to the UPF0319 family.

This is UPF0319 protein YccT from Salmonella dublin (strain CT_02021853).